Here is a 254-residue protein sequence, read N- to C-terminus: Imidazole glycerol phosphate synthase subunit HisF (254 aa).

Catalysis depends on residues D11 and D130.

Belongs to the HisA/HisF family. Heterodimer of HisH and HisF.

Its subcellular location is the cytoplasm. The enzyme catalyses 5-[(5-phospho-1-deoxy-D-ribulos-1-ylimino)methylamino]-1-(5-phospho-beta-D-ribosyl)imidazole-4-carboxamide + L-glutamine = D-erythro-1-(imidazol-4-yl)glycerol 3-phosphate + 5-amino-1-(5-phospho-beta-D-ribosyl)imidazole-4-carboxamide + L-glutamate + H(+). It participates in amino-acid biosynthesis; L-histidine biosynthesis; L-histidine from 5-phospho-alpha-D-ribose 1-diphosphate: step 5/9. Functionally, IGPS catalyzes the conversion of PRFAR and glutamine to IGP, AICAR and glutamate. The HisF subunit catalyzes the cyclization activity that produces IGP and AICAR from PRFAR using the ammonia provided by the HisH subunit. The polypeptide is Imidazole glycerol phosphate synthase subunit HisF (Solibacter usitatus (strain Ellin6076)).